The chain runs to 31 residues: Dermaseptin-DI3 (31 aa).

Belongs to the frog skin active peptide (FSAP) family. Dermaseptin subfamily. In terms of tissue distribution, expressed by the skin glands.

It localises to the secreted. In terms of biological role, antibacterial activity against Gram-positive bacteria S.aureus and E.faecalis, and Gram-negative bacteria P.aeruginosa and E.coli. This Phyllomedusa distincta (Monkey frog) protein is Dermaseptin-DI3.